The primary structure comprises 160 residues: MLPLCRLLSRRAQVPSHLSRCLSDSRPPFRIQRLDHLVLTVRNLDKTIKFYTKVLGMEATTFKGGRKALSFGIQKINLHETGKEFEPKASLPTPGSADLCLITETPLTTVVQHLKVCGVPIEEGPVSRTGAVGEITSVYLRDPDHNLIEVSNYESNDKKN.

Residues 33–153 (RLDHLVLTVR…DHNLIEVSNY (121 aa)) form the VOC domain.

The protein belongs to the glyoxalase I family.

The protein is Glyoxalase domain-containing protein 5 (glod5) of Xenopus laevis (African clawed frog).